The chain runs to 470 residues: Argininosuccinate lyase (470 aa).

This sequence belongs to the lyase 1 family. Argininosuccinate lyase subfamily.

Its subcellular location is the cytoplasm. It carries out the reaction 2-(N(omega)-L-arginino)succinate = fumarate + L-arginine. It participates in amino-acid biosynthesis; L-arginine biosynthesis; L-arginine from L-ornithine and carbamoyl phosphate: step 3/3. This Prochlorococcus marinus (strain MIT 9303) protein is Argininosuccinate lyase.